The sequence spans 181 residues: Transcriptional repressor NrdR (181 aa).

A zinc finger spans residues 3-34 (CLFCQHTDTRVIDSRVSEDGATIRRRRECEAC). One can recognise an ATP-cone domain in the interval 49–139 (PVIIKKDGGR…VYRSFQDVAD (91 aa)).

This sequence belongs to the NrdR family. It depends on Zn(2+) as a cofactor.

Functionally, negatively regulates transcription of bacterial ribonucleotide reductase nrd genes and operons by binding to NrdR-boxes. The polypeptide is Transcriptional repressor NrdR (Xylella fastidiosa (strain M12)).